Consider the following 135-residue polypeptide: Antennal-specific protein OS-C (135 aa).

Positions 1-27 (MGFHMGRQLLLSGFLLVMLQMVTQTQA) are cleaved as a signal peptide. A disordered region spans residues 43 to 84 (VIKREGDDDGDDDDSSSEETVEDSEESRRRRREVNTDNTPSA). Positions 49–67 (DDDGDDDDSSSEETVEDSE) are enriched in acidic residues.

As to expression, antenna. In the third antennal segment. Expressed in sencilla coeloconica.

The sequence is that of Antennal-specific protein OS-C (Os-C) from Drosophila melanogaster (Fruit fly).